Here is a 540-residue protein sequence, read N- to C-terminus: Upstream-binding protein 1 (540 aa).

Position 22 is a phosphoserine (serine 22). The Grh/CP2 DB domain maps to 60-296 (EHPPFQYVMC…EQKKSSKRTL (237 aa)). Disordered stretches follow at residues 236–270 (KPKGADRKQKTDREKMEKRTAHEKEKYQPSYDTTI) and 285–368 (EHEQ…QPSA). Residues 238 to 262 (KGADRKQKTDREKMEKRTAHEKEKY) are compositionally biased toward basic and acidic residues. Residues 320-368 (YVNNSPSPAPTFTSPQQSTCSVPDSNSSSPNHQGDGASQTSGEQIQPSA) are compositionally biased toward polar residues. Serine 390 and serine 393 each carry phosphoserine.

Belongs to the grh/CP2 family. CP2 subfamily. As to quaternary structure, interacts with TFCP2. Interacts with PIAS1, and is probably part of a complex containing TFCP2, UBP1 and PIAS1. Expressed in adrenal tissue, JEG-3, NCI-H295A, Hep-G2 and HeLa cell lines.

Its subcellular location is the nucleus. Functionally, functions as a transcriptional activator in a promoter context-dependent manner. Modulates the placental expression of CYP11A1. Involved in regulation of the alpha-globin gene in erythroid cells. Activation of the alpha-globin promoter in erythroid cells is via synergistic interaction with TFCP2. Involved in regulation of the alpha-globin gene in erythroid cells. Binds strongly to sequences around the HIV-1 initiation site and weakly over the TATA-box. Represses HIV-1 transcription by inhibiting the binding of TFIID to the TATA-box. This is Upstream-binding protein 1 (UBP1) from Homo sapiens (Human).